The following is a 267-amino-acid chain: Neural/ectodermal development factor IMP-L2 (267 aa).

The signal sequence occupies residues 1-25; the sequence is MEAKMNLHVCALALLLFGSIATVRG. Ig-like C2-type domains follow at residues 48-149 and 174-260; these read PRNR…KTIY and PRII…TFVY. 2 disulfides stabilise this stretch: cysteine 80–cysteine 139 and cysteine 195–cysteine 244.

Detected in several sites including the ventral neuroectoderm, the tracheal pits, the pharynx and esophagus, and specific neuronal cell bodies, where it is primarily expressed.

It localises to the secreted. It is found in the extracellular space. Its function is as follows. Essential developmental role during embryogenesis, in particular the normal development of the nervous system. May be involved in some aspect of cell adhesion. This is Neural/ectodermal development factor IMP-L2 (ImpL2) from Drosophila melanogaster (Fruit fly).